The chain runs to 492 residues: 3-octaprenyl-4-hydroxybenzoate carboxy-lyase (492 aa).

Asn175 is a binding site for Mn(2+). Residues 178 to 180 (IYR), 192 to 194 (RWL), and 197 to 198 (RG) each bind prenylated FMN. Glu241 contacts Mn(2+). Asp290 functions as the Proton donor in the catalytic mechanism.

This sequence belongs to the UbiD family. In terms of assembly, homohexamer. Requires prenylated FMN as cofactor. It depends on Mn(2+) as a cofactor.

The protein resides in the cell membrane. The enzyme catalyses a 4-hydroxy-3-(all-trans-polyprenyl)benzoate + H(+) = a 2-(all-trans-polyprenyl)phenol + CO2. It participates in cofactor biosynthesis; ubiquinone biosynthesis. Its function is as follows. Catalyzes the decarboxylation of 3-octaprenyl-4-hydroxy benzoate to 2-octaprenylphenol, an intermediate step in ubiquinone biosynthesis. This is 3-octaprenyl-4-hydroxybenzoate carboxy-lyase from Salmonella choleraesuis (strain SC-B67).